The primary structure comprises 718 residues: F-box/LRR-repeat protein 18 (718 aa).

Positions 25 to 72 (GVHLLGFSDEILLHILSHVPSTDLILNVRRTCRKLAALCLDKSLIHTV) constitute an F-box domain. LRR repeat units follow at residues 77-103 (DYQASEDKVRQLVKEIGREIQQLSMAG), 104-128 (CYWLPGSTVEHVARCRSLVKVNLSG), 129-153 (CHLTSLRLSKMLSALQHLRSLAIDV), 177-201 (KQTLFTPSYGVVPCCTSLEKLLLYF), 324-352 (CTLSGGHLIQQVINGGKDLRSLASLNLSG), 367-392 (EDDIDSSILETLVASCCNLRHLNLSA), 393-422 (AHHHSSEGLGRHLCQLLARLRHLRSLSLPV), 468-492 (CPQPSSVFWSLLKNLPFLEHLELIG), 516-540 (AQSVGDSEVAAIGQLAFLRHLTLAQ), 542-567 (PSVLTGSGLVNIGLQCQQLRSLSLAN), 572-597 (GKVVYMPALSDMLKHCKRLRDLRLEQ), and 599-623 (YFSANAQFFQALSQCPSLQRLCLVS).

As to quaternary structure, directly interacts with SKP1 and CUL1.

In terms of biological role, substrate-recognition component of the SCF (SKP1-CUL1-F-box protein)-type E3 ubiquitin ligase complex. The sequence is that of F-box/LRR-repeat protein 18 (FBXL18) from Homo sapiens (Human).